We begin with the raw amino-acid sequence, 248 residues long: Adenosylcobinamide-GDP ribazoletransferase (248 aa).

7 consecutive transmembrane segments (helical) span residues 24 to 44, 70 to 90, 106 to 126, 134 to 154, 157 to 177, 188 to 210, and 228 to 248; these read EINLKKGSALLPFVGVIIGAW, IIITGGFHVDALADTADGLFS, VGANGVIAICFYFLFYGSLFL, IGWLFFVLPIVAKGVTMLLFA, TYAGSKAGLGSIFLGVPWWPV, LGLFFSYIGVIAYAGVILFTIIY, and AGGQMGQLICLFCLVLLWGLI.

This sequence belongs to the CobS family. The cofactor is Mg(2+).

It localises to the cell membrane. It carries out the reaction alpha-ribazole + adenosylcob(III)inamide-GDP = adenosylcob(III)alamin + GMP + H(+). It catalyses the reaction alpha-ribazole 5'-phosphate + adenosylcob(III)inamide-GDP = adenosylcob(III)alamin 5'-phosphate + GMP + H(+). The protein operates within cofactor biosynthesis; adenosylcobalamin biosynthesis; adenosylcobalamin from cob(II)yrinate a,c-diamide: step 7/7. Functionally, joins adenosylcobinamide-GDP and alpha-ribazole to generate adenosylcobalamin (Ado-cobalamin). Also synthesizes adenosylcobalamin 5'-phosphate from adenosylcobinamide-GDP and alpha-ribazole 5'-phosphate. This Listeria monocytogenes serotype 4b (strain CLIP80459) protein is Adenosylcobinamide-GDP ribazoletransferase.